The sequence spans 143 residues: MKLNTLAPAAGSKSAPKRLGRGIGSGLGKTSGKGHKGQKARSGGYHKVGFEGGQMPLQRRLPKFGFTSASKRHVAEIRLHELNNLVADEVTLDTLKDFGLIRKDIKTVKVIASGEIQKAVSLKGIACTKGAKEAIEKAGGKVE.

The tract at residues 1-52 is disordered; it reads MKLNTLAPAAGSKSAPKRLGRGIGSGLGKTSGKGHKGQKARSGGYHKVGFEG. Gly residues predominate over residues 21–31; that stretch reads RGIGSGLGKTS.

This sequence belongs to the universal ribosomal protein uL15 family. Part of the 50S ribosomal subunit.

Binds to the 23S rRNA. The polypeptide is Large ribosomal subunit protein uL15 (Francisella tularensis subsp. mediasiatica (strain FSC147)).